A 247-amino-acid polypeptide reads, in one-letter code: Probable phosphatase Shew_1420 (247 aa).

His-8, His-10, His-16, His-41, Glu-74, His-102, His-132, Asp-193, and His-195 together coordinate Zn(2+).

The protein belongs to the PHP family. It depends on Zn(2+) as a cofactor.

The sequence is that of Probable phosphatase Shew_1420 from Shewanella loihica (strain ATCC BAA-1088 / PV-4).